The sequence spans 151 residues: Transcriptional regulator MraZ (151 aa).

SpoVT-AbrB domains lie at 5-52 and 81-124; these read IHQV…PLSE and ATDL…SQEE.

The protein belongs to the MraZ family. As to quaternary structure, forms oligomers.

Its subcellular location is the cytoplasm. The protein resides in the nucleoid. This Marinomonas sp. (strain MWYL1) protein is Transcriptional regulator MraZ.